We begin with the raw amino-acid sequence, 235 residues long: Ubiquinone biosynthesis O-methyltransferase (235 aa).

S-adenosyl-L-methionine-binding residues include Arg-39, Gly-59, Asp-80, and Met-124.

The protein belongs to the methyltransferase superfamily. UbiG/COQ3 family.

The catalysed reaction is a 3-demethylubiquinol + S-adenosyl-L-methionine = a ubiquinol + S-adenosyl-L-homocysteine + H(+). It catalyses the reaction a 3-(all-trans-polyprenyl)benzene-1,2-diol + S-adenosyl-L-methionine = a 2-methoxy-6-(all-trans-polyprenyl)phenol + S-adenosyl-L-homocysteine + H(+). Its pathway is cofactor biosynthesis; ubiquinone biosynthesis. Functionally, O-methyltransferase that catalyzes the 2 O-methylation steps in the ubiquinone biosynthetic pathway. The polypeptide is Ubiquinone biosynthesis O-methyltransferase (Vibrio campbellii (strain ATCC BAA-1116)).